Reading from the N-terminus, the 461-residue chain is Bifunctional protein HldE (461 aa).

The tract at residues methionine 1–glutamate 312 is ribokinase. Asparagine 191–glutamate 194 contributes to the ATP binding site. Residue aspartate 259 is part of the active site. Positions phenylalanine 334–lysine 461 are cytidylyltransferase.

In the N-terminal section; belongs to the carbohydrate kinase PfkB family. This sequence in the C-terminal section; belongs to the cytidylyltransferase family. Homodimer.

It carries out the reaction D-glycero-beta-D-manno-heptose 7-phosphate + ATP = D-glycero-beta-D-manno-heptose 1,7-bisphosphate + ADP + H(+). The catalysed reaction is D-glycero-beta-D-manno-heptose 1-phosphate + ATP + H(+) = ADP-D-glycero-beta-D-manno-heptose + diphosphate. Its pathway is nucleotide-sugar biosynthesis; ADP-L-glycero-beta-D-manno-heptose biosynthesis; ADP-L-glycero-beta-D-manno-heptose from D-glycero-beta-D-manno-heptose 7-phosphate: step 1/4. The protein operates within nucleotide-sugar biosynthesis; ADP-L-glycero-beta-D-manno-heptose biosynthesis; ADP-L-glycero-beta-D-manno-heptose from D-glycero-beta-D-manno-heptose 7-phosphate: step 3/4. Catalyzes the phosphorylation of D-glycero-D-manno-heptose 7-phosphate at the C-1 position to selectively form D-glycero-beta-D-manno-heptose-1,7-bisphosphate. Functionally, catalyzes the ADP transfer from ATP to D-glycero-beta-D-manno-heptose 1-phosphate, yielding ADP-D-glycero-beta-D-manno-heptose. In Campylobacter jejuni subsp. jejuni serotype O:6 (strain 81116 / NCTC 11828), this protein is Bifunctional protein HldE.